Consider the following 340-residue polypeptide: tRNA N6-adenosine threonylcarbamoyltransferase (340 aa).

Fe cation-binding residues include H113 and H117. Substrate-binding positions include 135-139, D169, G182, D186, and N274; that span reads LVSGG. D302 contributes to the Fe cation binding site.

The protein belongs to the KAE1 / TsaD family. It depends on Fe(2+) as a cofactor.

The protein resides in the cytoplasm. The enzyme catalyses L-threonylcarbamoyladenylate + adenosine(37) in tRNA = N(6)-L-threonylcarbamoyladenosine(37) in tRNA + AMP + H(+). Functionally, required for the formation of a threonylcarbamoyl group on adenosine at position 37 (t(6)A37) in tRNAs that read codons beginning with adenine. Is involved in the transfer of the threonylcarbamoyl moiety of threonylcarbamoyl-AMP (TC-AMP) to the N6 group of A37, together with TsaE and TsaB. TsaD likely plays a direct catalytic role in this reaction. This Mycobacterium sp. (strain KMS) protein is tRNA N6-adenosine threonylcarbamoyltransferase.